The following is a 489-amino-acid chain: MAKAVKKEIAKSEEVVSIKAPRKEPGKKIPVVSIVGRQNVGKSTLFNSLLKKKLAITEDYPGVTRDVLSARIYQEEKDLDFYLCDTPGLDIENPDSLSQTILETAYGQLRESDVIVFLLDKNLITTADHGLLNYLRREDKVANKPIIYCVNKADKELDEFDLEEFYRMGLSEVLPISAIGRKNLGLLLEKIQFFLKDKPGKVWIEKISASKKKEAQPLPLAEEDYEFRLAIVGKPNSGKSSLLNAICGYERAVVSDVAGTTRDSIDTLLEFGDRRLLLTDTAGIRKQSKTAEALEFYSYQRTIKAIESSDLVIHLLDAKKGFGDFDKKITSLLQEKGKPFLLAVNKWDSIEDKTDKTFKEYKEKLYSRFPLLNEVPIITISATERLRVQKLMDLSFDLASRSHRKVSTSELNKNLKNWMGLAGRSFSAHQPPKMLYCTQVSTSPFHLILFVNHVEYFKSNLVSFLKKKLTETYDLQGIPIRLEFRSDRK.

EngA-type G domains lie at 30 to 199 (PVVS…KDKP) and 227 to 403 (FRLA…SRSH). GTP is bound by residues 36 to 43 (GRQNVGKS), 85 to 89 (DTPGL), 151 to 154 (NKAD), 233 to 240 (GKPNSGKS), 280 to 284 (DTAGI), and 345 to 348 (NKWD). Residues 404–488 (RKVSTSELNK…PIRLEFRSDR (85 aa)) enclose the KH-like domain.

It belongs to the TRAFAC class TrmE-Era-EngA-EngB-Septin-like GTPase superfamily. EngA (Der) GTPase family. As to quaternary structure, associates with the 50S ribosomal subunit.

Functionally, GTPase that plays an essential role in the late steps of ribosome biogenesis. In Leptospira interrogans serogroup Icterohaemorrhagiae serovar copenhageni (strain Fiocruz L1-130), this protein is GTPase Der.